Here is a 252-residue protein sequence, read N- to C-terminus: Putative endonuclease C1F12.06c (252 aa).

Mg(2+) contacts are provided by Asp-43 and Asp-114.

Belongs to the endonuclease V family.

The protein resides in the cytoplasm. Its subcellular location is the nucleus. In Schizosaccharomyces pombe (strain 972 / ATCC 24843) (Fission yeast), this protein is Putative endonuclease C1F12.06c.